Here is a 411-residue protein sequence, read N- to C-terminus: Arginine deiminase (411 aa).

Cys401 (amidino-cysteine intermediate) is an active-site residue.

Belongs to the arginine deiminase family. In terms of processing, glycosylated.

It localises to the cytoplasm. It carries out the reaction L-arginine + H2O = L-citrulline + NH4(+). It functions in the pathway amino-acid degradation; L-arginine degradation via ADI pathway; carbamoyl phosphate from L-arginine: step 1/2. The polypeptide is Arginine deiminase (arcA) (Streptococcus pyogenes serotype M1).